We begin with the raw amino-acid sequence, 519 residues long: Laccase-2 (519 aa).

Residues Met-1–Ala-20 form the signal peptide. Plastocyanin-like domains lie at Ile-22–Tyr-147 and Val-159–Tyr-301. Asn-74 carries N-linked (GlcNAc...) asparagine glycosylation. Positions 84, 86, 129, and 131 each coordinate Cu cation. Cystine bridges form between Cys-105–Cys-508 and Cys-137–Cys-225. Residues Asn-161, Asn-228, Asn-237, Asn-271, Asn-353, and Asn-361 are each glycosylated (N-linked (GlcNAc...) asparagine). Positions Thr-368–Asp-490 constitute a Plastocyanin-like 3 domain. Cu cation-binding residues include His-415, His-418, His-420, His-472, Cys-473, His-474, and His-478.

This sequence belongs to the multicopper oxidase family. Homodimer. Requires Cu cation as cofactor.

It is found in the secreted. The catalysed reaction is 4 hydroquinone + O2 = 4 benzosemiquinone + 2 H2O. Functionally, lignin degradation and detoxification of lignin-derived products. This Trametes villosa (White-rot fungus) protein is Laccase-2.